A 277-amino-acid polypeptide reads, in one-letter code: Thymidylate synthase (277 aa).

A dUMP-binding site is contributed by arginine 21. Histidine 51 is a (6R)-5,10-methylene-5,6,7,8-tetrahydrofolate binding site. Position 139–140 (139–140) interacts with dUMP; that stretch reads RR. The active-site Nucleophile is cysteine 159. DUMP is bound by residues 179–182, asparagine 190, and 220–222; these read RSAD and HIY. Aspartate 182 serves as a coordination point for (6R)-5,10-methylene-5,6,7,8-tetrahydrofolate. Position 276 (alanine 276) interacts with (6R)-5,10-methylene-5,6,7,8-tetrahydrofolate.

This sequence belongs to the thymidylate synthase family. Bacterial-type ThyA subfamily. Homodimer.

The protein resides in the cytoplasm. The enzyme catalyses dUMP + (6R)-5,10-methylene-5,6,7,8-tetrahydrofolate = 7,8-dihydrofolate + dTMP. It participates in pyrimidine metabolism; dTTP biosynthesis. Its function is as follows. Catalyzes the reductive methylation of 2'-deoxyuridine-5'-monophosphate (dUMP) to 2'-deoxythymidine-5'-monophosphate (dTMP) while utilizing 5,10-methylenetetrahydrofolate (mTHF) as the methyl donor and reductant in the reaction, yielding dihydrofolate (DHF) as a by-product. This enzymatic reaction provides an intracellular de novo source of dTMP, an essential precursor for DNA biosynthesis. The sequence is that of Thymidylate synthase from Roseobacter denitrificans (strain ATCC 33942 / OCh 114) (Erythrobacter sp. (strain OCh 114)).